A 124-amino-acid chain; its full sequence is Keratin-associated protein 12-2 (124 aa).

Tandem repeats lie at residues Cys10–Ala13, Cys14–Ser18, Cys19–Cys23, Ser24–Pro28, Cys33–Leu38, Cys39–Cys43, Ser44–Thr48, Cys49–Thr52, Cys53–Ser57, Tyr58–Val62, Cys63–Thr67, Tyr68–Leu72, Cys73–Ser77, Cys78–Val82, Phe83–Ser87, Tyr88–Val92, Cys98–Gly102, Cys103–Ser107, Cys108–Val112, and Tyr113–Ser117. The interval Cys10–Ser117 is 20 X 5 AA approximate repeats.

It belongs to the KRTAP type 12 family. In terms of assembly, interacts with hair keratins.

Its function is as follows. In the hair cortex, hair keratin intermediate filaments are embedded in an interfilamentous matrix, consisting of hair keratin-associated proteins (KRTAP), which are essential for the formation of a rigid and resistant hair shaft through their extensive disulfide bond cross-linking with abundant cysteine residues of hair keratins. The matrix proteins include the high-sulfur and high-glycine-tyrosine keratins. This chain is Keratin-associated protein 12-2, found in Bos taurus (Bovine).